The chain runs to 141 residues: Cystatin-S (141 aa).

The signal sequence occupies residues 1 to 20 (MARPLCTLLLLMATLAGALA). A phosphoserine mark is found at Ser-21 and Ser-23. A Secondary area of contact motif is present at residues 76-80 (QTFGG). Cystine bridges form between Cys-94/Cys-104 and Cys-118/Cys-138.

This sequence belongs to the cystatin family. Post-translationally, phosphorylated at both its N- and C-terminal regions. In terms of tissue distribution, expressed in submandibular and sublingual saliva but not in parotid saliva (at protein level). Expressed in saliva, tears, urine and seminal fluid.

The protein localises to the secreted. This protein strongly inhibits papain and ficin, partially inhibits stem bromelain and bovine cathepsin C, but does not inhibit porcine cathepsin B or clostripain. Papain is inhibited non-competitively. This is Cystatin-S (CST4) from Homo sapiens (Human).